We begin with the raw amino-acid sequence, 716 residues long: FLYWCH-type zinc finger-containing protein 1 (716 aa).

The interval 1–35 (MPLPEPSEQEGESVKAGQEPSPKPGTDVIPAAPRK) is disordered. A Phosphoserine modification is found at serine 21. The segment at 116 to 174 (FLRTPFGGRLLVLESFLYKQEKAVGDKVYWKCRQHAELGCRGRAITRGLRATVMRGHCH) adopts an FLYWCH-type 1 zinc-finger fold. Lysine 134 is covalently cross-linked (Glycyl lysine isopeptide (Lys-Gly) (interchain with G-Cter in SUMO2)). The disordered stretch occupies residues 191-231 (PSLALPEGLGEPQGPEGPGGRVEEPLEGVGPWQCPEEPEPT). The span at 195-204 (LPEGLGEPQG) shows a compositional bias: low complexity. The residue at position 261 (serine 261) is a Phosphoserine. The FLYWCH-type 2 zinc-finger motif lies at 273 to 331 (FLRTCYGGSFLVHESFLYKREKAVGDKVYWTCRDHALHGCRSRAITQGQRVTVMRGHCH). Serine 371 is modified (phosphoserine). The disordered stretch occupies residues 377–421 (GPGPLTLTRPRPRKRAKVEDQELPTQPEAPDEHQDMDADPGGPEF). A Glycyl lysine isopeptide (Lys-Gly) (interchain with G-Cter in SUMO2) cross-link involves residue lysine 393. The FLYWCH-type 3 zinc finger occupies 421 to 479 (FLKTPLGGSFLVYESFLYRREKAAGEKVYWTCRDQARMGCRSRAITQGRRVTVMRGHCH). Serine 503 is modified (phosphoserine). The FLYWCH-type 4 zinc-finger motif lies at 509–567 (FLKTPLGGSFLVYESFLYRREKAAGEKVYWTCRDQARMGCRSRAITQGRRVMVMRRHCH). Serine 591 carries the phosphoserine modification. Residues 600-658 (FLRTSLGGRFLVHESFLYRKEKAAGEKVYWMCRDQARLGCRSRAITQGHRIMVMRSHCH) form an FLYWCH-type 5 zinc finger. A Glycyl lysine isopeptide (Lys-Gly) (interchain with G-Cter in SUMO2) cross-link involves residue lysine 685. Phosphoserine is present on serine 696.

Interacts with CTNNB1 (when unphosphorylated), perhaps preventing interaction of CTNNB1 with TCF4, and thereby regulating transcription activation; phosphorylation of CTNNB1 may inhibit the interaction.

It localises to the nucleus. The protein localises to the chromosome. Its subcellular location is the centromere. In terms of biological role, transcription cofactor. Negatively regulates transcription activation by catenin beta-1 CTNNB1, perhaps acting by competing with TCF4 for CTNNB1 binding. May play a role in DNA-damage response signaling. Binds specifically to DNA sequences at peri-centromeric chromatin loci. The polypeptide is FLYWCH-type zinc finger-containing protein 1 (FLYWCH1) (Homo sapiens (Human)).